Consider the following 127-residue polypeptide: Large ribosomal subunit protein eL8 (127 aa).

Belongs to the eukaryotic ribosomal protein eL8 family. Part of the 50S ribosomal subunit. Component of box C/D small ribonucleoprotein (sRNP) particles that contain rpl7ae, FlpA and nop5, plus a guide RNA. These sRNP particles form homodimers, giving rise to an asymmetric holoenzyme. Probably part of the RNase P complex.

The protein localises to the cytoplasm. In terms of biological role, multifunctional RNA-binding protein that recognizes the K-turn motif in ribosomal RNA, the RNA component of RNase P, box H/ACA, box C/D and box C'/D' sRNAs. The chain is Large ribosomal subunit protein eL8 from Saccharolobus solfataricus (strain ATCC 35092 / DSM 1617 / JCM 11322 / P2) (Sulfolobus solfataricus).